We begin with the raw amino-acid sequence, 84 residues long: Large ribosomal subunit protein bL31B (84 aa).

The protein belongs to the bacterial ribosomal protein bL31 family. Type B subfamily. As to quaternary structure, part of the 50S ribosomal subunit.

The chain is Large ribosomal subunit protein bL31B from Bacteroides thetaiotaomicron (strain ATCC 29148 / DSM 2079 / JCM 5827 / CCUG 10774 / NCTC 10582 / VPI-5482 / E50).